The chain runs to 399 residues: Tyrosine--tRNA ligase (399 aa).

Residues Pro-42–His-51 carry the 'HIGH' region motif. A 'KMSKS' region motif is present at residues Lys-226–Ser-230. Lys-229 contributes to the ATP binding site. The 62-residue stretch at Ile-337–Val-398 folds into the S4 RNA-binding domain.

The protein belongs to the class-I aminoacyl-tRNA synthetase family. TyrS type 2 subfamily. As to quaternary structure, homodimer.

The protein localises to the cytoplasm. It catalyses the reaction tRNA(Tyr) + L-tyrosine + ATP = L-tyrosyl-tRNA(Tyr) + AMP + diphosphate + H(+). Catalyzes the attachment of tyrosine to tRNA(Tyr) in a two-step reaction: tyrosine is first activated by ATP to form Tyr-AMP and then transferred to the acceptor end of tRNA(Tyr). This is Tyrosine--tRNA ligase from Colwellia psychrerythraea (strain 34H / ATCC BAA-681) (Vibrio psychroerythus).